Here is a 580-residue protein sequence, read N- to C-terminus: Serine/threonine-protein kinase PINK1, mitochondrial (580 aa).

Residues 1–77 constitute a mitochondrion transit peptide; the sequence is MAVRQALGRG…RFFRQSVAGL (77 aa). The interval 28–60 is disordered; it reads VSGWGKPGPGAAWGRGERPGRVSSPGAQPRPLG. A helical transmembrane segment spans residues 94 to 110; the sequence is GPCGRAVFLAFGLGLGL. Positions 111–117 are required for outer membrane localization; the sequence is IEEKQAE. One can recognise a Protein kinase domain in the interval 156 to 510; sequence YLIGQAIGKG…IAANVLHLSL (355 aa). Residues 162 to 170 and Lys218 each bind ATP; that span reads IGKGCNAAV. Ser227 carries the phosphoserine; by autocatalysis modification. Asp361 (proton acceptor) is an active-site residue. Ser401 bears the Phosphoserine; by autocatalysis mark.

The protein belongs to the protein kinase superfamily. Ser/Thr protein kinase family. Upon mitochondrial depolarization, it forms a supercomplex with TOM and TIM23 complexes. PINK1-TOM-TIM23 supercomplex formation requires PINK1 interaction with TOMM20 and TOMM70 and is critical for PINK1 stabilization at the outer mitochondrial membrane, kinase activation and downstream mitophagy. Upon mitochondrial depolarization, interacts with TIMM23; the interaction is required for PINK1 accumulation at the outer mitochondrial membrane, kinase activation by autophosphorylation and PRKN recruitement to mitochondria. Interacts with PRKN. Interacts with FBXO7. Forms a complex with PRKN and PARK7. Interacts with NENF. Mg(2+) serves as cofactor. In terms of processing, proteolytically cleaved. In healthy cells, the precursor is continuously imported into the inner mitochondrial membrane (IMM), where it is proteolytically cleaved by mitochondrial-processing peptidase (MPP) and then undergoes further proteolytic cleavage by PARL or AFG3L2 to give rise to the 52 kDa short form. The 52 kDa short form is then released into the cytosol where it rapidly undergoes proteasome-dependent degradation. In unhealthy cells, when cellular stress conditions lead to the loss of mitochondrial membrane potential, mitochondrial import is impaired leading to the precursor accumulating on the outer mitochondrial membrane (OMM). If accumulation at the OMM fails and it is imported into the depolarized mitochondria, it undergoes cleavage by the IMM protease OMA1, promoting its subsequent degradation by the proteasome. Post-translationally, autophosphorylated. Loss of mitochondrial membrane potential results in the precursor accumulating on the outer mitochondrial membrane (OMM) where it is activated by autophosphorylation. Autophosphorylation at Ser-227 and Ser-401 is sufficient and essential for selective recruitment of PRKN to depolarized mitochondria, via PINK1-dependent phosphorylation of ubiquitin and maybe PRKN.

The protein localises to the mitochondrion outer membrane. The protein resides in the mitochondrion inner membrane. It is found in the cytoplasm. Its subcellular location is the cytosol. It carries out the reaction L-seryl-[protein] + ATP = O-phospho-L-seryl-[protein] + ADP + H(+). The enzyme catalyses L-threonyl-[protein] + ATP = O-phospho-L-threonyl-[protein] + ADP + H(+). In terms of biological role, serine/threonine-protein kinase which acts as a sensor of mitochondrial damage and protects against mitochondrial dysfunction during cellular stress. It phosphorylates mitochondrial proteins to coordinate mitochondrial quality control mechanisms that remove and replace dysfunctional mitochondrial components. Depending on the severity of mitochondrial damage, activity ranges from preventing apoptosis and stimulating mitochondrial biogenesis to eliminating severely damaged mitochondria via PINK1-PRKN-dependent mitophagy. When cellular stress results in irreversible mitochondrial damage, PINK1 accumulates at the outer mitochondrial membrane (OMM) where it phosphorylates pre-existing polyubiquitin chains at 'Ser-65', recruits PRKN from the cytosol to the OMM and activates PRKN by phosphorylation at 'Ser-65'; activated PRKN then ubiquinates VDAC1 and other OMM proteins to initiate mitophagy. The PINK1-PRKN pathway also promotes fission of damaged mitochondria through phosphorylation and PRKN-dependent degradation of mitochondrial proteins involved in fission such as MFN2. This prevents the refusion of unhealthy mitochondria with the mitochondrial network or initiates mitochondrial fragmentation facilitating their later engulfment by autophagosomes. Also promotes mitochondrial fission independently of PRKN and ATG7-mediated mitophagy, via the phosphorylation and activation of DNM1L. Regulates motility of damaged mitochondria by promoting the ubiquitination and subsequent degradation of MIRO1 and MIRO2; in motor neurons, this likely inhibits mitochondrial intracellular anterograde transport along the axons which probably increases the chance of the mitochondria undergoing mitophagy in the soma. Required for ubiquinone reduction by mitochondrial complex I by mediating phosphorylation of complex I subunit NDUFA10. Phosphorylates LETM1, positively regulating its mitochondrial calcium transport activity. The polypeptide is Serine/threonine-protein kinase PINK1, mitochondrial (Rattus norvegicus (Rat)).